Consider the following 1642-residue polypeptide: DNA-directed RNA polymerase I subunit RPA1 (1642 aa).

4 residues coordinate Zn(2+): C66, C69, C75, and H78. Mg(2+)-binding residues include D565, D567, and D569. Residues 939–951 (PQDFFFHCMAGRE) are bridging helix. A disordered region spans residues 1337 to 1428 (DADKDDDNDL…GNDNDGDDKA (92 aa)). Acidic residues predominate over residues 1340-1350 (KDDDNDLDNGD). Basic and acidic residues predominate over residues 1351-1361 (EVGRSKAKAND). 2 stretches are compositionally biased toward acidic residues: residues 1362 to 1373 (DDSSDDNDDDDA) and 1386 to 1424 (KDYD…DNDG). Phosphoserine is present on residues S1364 and S1365.

Belongs to the RNA polymerase beta' chain family. As to quaternary structure, component of the RNA polymerase I (Pol I) complex consisting of at least 13 subunits. In terms of processing, phosphorylated.

The protein resides in the nucleus. It is found in the nucleolus. It carries out the reaction RNA(n) + a ribonucleoside 5'-triphosphate = RNA(n+1) + diphosphate. Its function is as follows. DNA-dependent RNA polymerase catalyzes the transcription of DNA into RNA using the four ribonucleoside triphosphates as substrates. Largest and catalytic core component of RNA polymerase I which synthesizes ribosomal RNA precursors. Forms the polymerase active center together with the second largest subunit. A single stranded DNA template strand of the promoter is positioned within the central active site cleft of Pol I. A bridging helix emanates from RPA1 and crosses the cleft near the catalytic site and is thought to promote translocation of Pol I by acting as a ratchet that moves the RNA-DNA hybrid through the active site by switching from straight to bent conformations at each step of nucleotide addition. This Drosophila melanogaster (Fruit fly) protein is DNA-directed RNA polymerase I subunit RPA1 (RpI1).